The primary structure comprises 83 residues: Carboxysome shell vertex protein CsoS4A (83 aa).

One can recognise a BMV domain in the interval 1 to 78 (MKIMQVEKTL…SDLTIIGIID (78 aa)).

It belongs to the CcmL/EutN family. CsoS4 subfamily. Homopentamer.

Its subcellular location is the carboxysome. Probably forms vertices in the carboxysome, a polyhedral inclusion where RuBisCO (ribulose bisphosphate carboxylase, cbbL-cbbS) is sequestered. Has been modeled to induce curvature upon insertion into an otherwise flat hexagonal layer of major carboxysome subunits. A minor shell protein, only 12 pentamers of CsoS4A/CsoS4B are calculated to be present in each carboxysome. The 2 CsoS4 proteins contribute to the impermeability of the carboxysome to CO(2). Functionally, unlike beta-carboxysomes, alpha-carboxysomes (Cb) can form without cargo protein. CsoS2 is essential for Cb formation and is also capable of targeting foreign proteins to the Cb. The Cb shell assembles with the aid of CsoS2; CsoS1A, CsoS1B and CsoS1C form the majority of the shell while CsoS4A and CsoS4B form vertices. CsoS1D forms pseudohexamers that probably control metabolite flux into and out of the shell. This chain is Carboxysome shell vertex protein CsoS4A, found in Halothiobacillus neapolitanus (strain ATCC 23641 / c2) (Thiobacillus neapolitanus).